A 407-amino-acid polypeptide reads, in one-letter code: Serpin-Z2 (407 aa).

A disordered region spans residues 1 to 28 (MDSKRKNQELSTSETADPSLSKTNKKQK). Residues 9-22 (ELSTSETADPSLSK) are compositionally biased toward polar residues. An RCL region spans residues 344 to 368 (GTEAAAATTVVVVTGSCLWEPKKKI).

Belongs to the serpin family.

Its function is as follows. Probable serine protease inhibitor. The protein is Serpin-Z2 of Arabidopsis thaliana (Mouse-ear cress).